Here is a 209-residue protein sequence, read N- to C-terminus: uncharacterized protein (209 aa).

The region spanning 1-199 (MQVFLDLDET…DELKRVTASL (199 aa)) is the FCP1 homology domain.

This is an uncharacterized protein from Dryophytes versicolor (chameleon treefrog).